The chain runs to 262 residues: Oxidoreductase GME11367 (262 aa).

The protein belongs to the avfA family.

The protein operates within secondary metabolite biosynthesis. In terms of biological role, oxidoreductase; part of the gene cluster that mediates the biosynthesis of dibenzodioxocinones such as pestalotiollide B, a novel class of inhibitors against cholesterol ester transfer protein (CEPT). The biosynthesis initiates from condensation of acetate and malonate units catalyzed by the non-reducing PKS pks8/GME11356. Pks8/GME11356 lacks a thioesterase (TE) domain, which is important to the cyclizing of the third ring of atrochrysone carboxylic acid, and the esterase GME11355 might play the role of TE and catalyzes the cyclization reaction of the C ring. The lactamase-like protein GME11357 (or other beta-lactamases in Pestalotiopsis microspora) probably hydrolyzes the thioester bond between the ACP of pks8/GME11356 and the intermediate to release atrochrysone carboxylic acid, which is spontaneously dehydrates to form endocrocin anthrone. Endocrocin anthrone is further converted to emodin via the endocrocin intermediate. Emodin is then oxidized by several enzymes such as the Baeyer-Villiger oxidase GME11358, the oxidoreductase GME11367, the short chain dehydrogenase/reductase GME11373, as well as by other oxidoreductases from the cluster, to modify the A and C rings and open the B ring, and finally yield monodictyphenone. The prenyltransferase GME11375 may catalyze the addition reaction between the C5 side chains and the carbon bone of dibenzodioxocinones. The remaining biochemical reactions to the final product dibenzodioxocinones should be methylation catalyzed by methyltransferase GME11366 and reduction and lactonization reaction catalyzed by a series of oxidordeuctases. This chain is Oxidoreductase GME11367, found in Pestalotiopsis microspora.